The following is an 831-amino-acid chain: Periplasmic nitrate reductase (831 aa).

Residues 1 to 29 (MTLTRRDLIKAQAAATAAAAAGLPVSALA) constitute a signal peptide (tat-type signal). Positions 41-97 (IRWSKAPCRFCGTGCGVMVGTRDGQVVATHGDTQAEVNRGLNCVKGYFLSKIMYGED) constitute a 4Fe-4S Mo/W bis-MGD-type domain. Cys-48, Cys-51, Cys-55, and Cys-83 together coordinate [4Fe-4S] cluster. Residues Lys-85, Gln-152, Asn-177, Cys-181, 214–221 (WGSNMAEM), 245–249 (STFTH), 264–266 (GTD), Met-375, Gln-379, Asn-485, 511–512 (SD), Lys-534, Asp-561, and 721–730 (TGRVLEHWHS) contribute to the Mo-bis(molybdopterin guanine dinucleotide) site. Residue Trp-797 coordinates substrate. Mo-bis(molybdopterin guanine dinucleotide) contacts are provided by Asn-805 and Lys-822.

It belongs to the prokaryotic molybdopterin-containing oxidoreductase family. NasA/NapA/NarB subfamily. Component of the periplasmic nitrate reductase NapAB complex composed of NapA and NapB. The cofactor is [4Fe-4S] cluster. It depends on Mo-bis(molybdopterin guanine dinucleotide) as a cofactor. In terms of processing, predicted to be exported by the Tat system. The position of the signal peptide cleavage has not been experimentally proven.

It localises to the periplasm. The catalysed reaction is 2 Fe(II)-[cytochrome] + nitrate + 2 H(+) = 2 Fe(III)-[cytochrome] + nitrite + H2O. Catalytic subunit of the periplasmic nitrate reductase complex NapAB. Receives electrons from NapB and catalyzes the reduction of nitrate to nitrite. This is Periplasmic nitrate reductase from Cereibacter sphaeroides (strain ATCC 17023 / DSM 158 / JCM 6121 / CCUG 31486 / LMG 2827 / NBRC 12203 / NCIMB 8253 / ATH 2.4.1.) (Rhodobacter sphaeroides).